The sequence spans 1197 residues: Pleckstrin homology domain-containing family A member 7 (1197 aa).

WW domains lie at 8–41 (DTLP…HPRT) and 53–86 (SDLP…HPVT). A disordered region spans residues 98 to 148 (LQDQPGGRMLKQPSSTISEASTTVTTSTVDSTSGSKGSRSSGRVHSFGKRD). Residues 111–140 (SSTISEASTTVTTSTVDSTSGSKGSRSSGR) show a composition bias toward low complexity. The 100-residue stretch at 158–257 (PVVVRGWLYK…WVRAMNQAAL (100 aa)) folds into the PH domain. 3 disordered regions span residues 348 to 384 (PGST…NGMP), 423 to 467 (LVST…QLPS), and 508 to 577 (FRHG…TVRP). Residues 528–546 (VSSTRNNSDVSRSVSVPPT) show a composition bias toward low complexity. Positions 568–577 (TPAERVTVRP) are enriched in basic and acidic residues. Residues 678–799 (DKILQELEFR…RIEDVMTGLS (122 aa)) adopt a coiled-coil conformation. Disordered regions lie at residues 830–928 (SRCM…SYSN) and 1032–1064 (HQRA…SDPG). Over residues 913–924 (RQSDERKRDRES) the composition is skewed to basic and acidic residues. Residues 1016–1044 (QRVRMSVEEQLERMKRHQRALVRERKRNL) adopt a coiled-coil conformation. The span at 1032–1043 (HQRALVRERKRN) shows a compositional bias: basic residues.

Its subcellular location is the cell junction. The protein resides in the adherens junction. It is found in the cytoplasm. It localises to the cytoskeleton. The protein localises to the microtubule organizing center. Its subcellular location is the centrosome. Functionally, required for zonula adherens biogenesis and maintenance. The polypeptide is Pleckstrin homology domain-containing family A member 7 (plekha7) (Danio rerio (Zebrafish)).